The chain runs to 388 residues: Na(+)/H(+) antiporter NhaA (388 aa).

Transmembrane regions (helical) follow at residues 14–34, 59–79, 95–115, 125–145, 154–174, 179–199, 219–239, 254–274, 292–312, 328–348, and 360–380; these read GGIILIIAAALAMLMANMGAT, MLLWINDALMAVFFLLIGLEV, AFPVIAAIGGMIVPALLYLAF, GWAIPAATDIAFALGVLALLG, IFLMALAIIDDLGAIIIIALF, LSIVSLGVAAFAIAVLALLNL, VLKSGVHATLAGVIVGFFIPL, VLHPWVAYLILPLFAFANAGV, IIAGLLIGKPLGISLFCWLAL, IMAVGILCGIGFTMSIFIASL, and WAKLGILIGSLLSAVVGYSWL.

This sequence belongs to the NhaA Na(+)/H(+) (TC 2.A.33) antiporter family.

It is found in the cell inner membrane. The catalysed reaction is Na(+)(in) + 2 H(+)(out) = Na(+)(out) + 2 H(+)(in). Functionally, na(+)/H(+) antiporter that extrudes sodium in exchange for external protons. The polypeptide is Na(+)/H(+) antiporter NhaA (Salmonella paratyphi A (strain ATCC 9150 / SARB42)).